The following is a 553-amino-acid chain: Dihydroxy-acid dehydratase (553 aa).

Asp78 lines the Mg(2+) pocket. Residue Cys119 participates in [2Fe-2S] cluster binding. Mg(2+)-binding residues include Asp120 and Lys121. Lys121 carries the N6-carboxylysine modification. Residue Cys191 coordinates [2Fe-2S] cluster. Glu444 is a Mg(2+) binding site. The active-site Proton acceptor is Ser470.

It belongs to the IlvD/Edd family. In terms of assembly, homodimer. Requires [2Fe-2S] cluster as cofactor. Mg(2+) is required as a cofactor.

The enzyme catalyses (2R)-2,3-dihydroxy-3-methylbutanoate = 3-methyl-2-oxobutanoate + H2O. It carries out the reaction (2R,3R)-2,3-dihydroxy-3-methylpentanoate = (S)-3-methyl-2-oxopentanoate + H2O. Its pathway is amino-acid biosynthesis; L-isoleucine biosynthesis; L-isoleucine from 2-oxobutanoate: step 3/4. It participates in amino-acid biosynthesis; L-valine biosynthesis; L-valine from pyruvate: step 3/4. Its function is as follows. Functions in the biosynthesis of branched-chain amino acids. Catalyzes the dehydration of (2R,3R)-2,3-dihydroxy-3-methylpentanoate (2,3-dihydroxy-3-methylvalerate) into 2-oxo-3-methylpentanoate (2-oxo-3-methylvalerate) and of (2R)-2,3-dihydroxy-3-methylbutanoate (2,3-dihydroxyisovalerate) into 2-oxo-3-methylbutanoate (2-oxoisovalerate), the penultimate precursor to L-isoleucine and L-valine, respectively. The polypeptide is Dihydroxy-acid dehydratase (Methanococcoides burtonii (strain DSM 6242 / NBRC 107633 / OCM 468 / ACE-M)).